The chain runs to 280 residues: Gem-associated protein 2 (280 aa).

The tract at residues 1–39 (MRRAELAGLKTMAWVPAESAVEELMPRLLPVEPCDLTEG) is may play a minor inhibitory role in snRNA binding to 5Sm (SNRPD1, SNRPD2, SNRPE, SNRPF and SNRPG) during snRNP assembly by inserting into the RNA binding pocket of 5Sm. S81 and S166 each carry phosphoserine.

It belongs to the gemin-2 family. As to quaternary structure, monomer. Part of the core SMN complex that contains SMN1, GEMIN2/SIP1, DDX20/GEMIN3, GEMIN4, GEMIN5, GEMIN6, GEMIN7, GEMIN8 and STRAP/UNRIP. Part of the SMN-Sm complex that contains SMN1, GEMIN2/SIP1, DDX20/GEMIN3, GEMIN4, GEMIN5, GEMIN6, GEMIN7, GEMIN8, STRAP/UNRIP and the Sm proteins SNRPB, SNRPD1, SNRPD2, SNRPD3, SNRPE, SNRPF and SNRPG. Interacts with GEMIN5; the interaction is direct. Interacts (via C-terminus) with SMN1; the interaction is direct. Interacts with SNRPD1; the interaction is direct. Interacts with SNRPD2; the interaction is direct. Interacts (via N-terminus) with SNRPF; the interaction is direct. Interacts (via N-terminus) with SNRPE; the interaction is direct. Interacts (via N-terminus) with SNRPG; the interaction is direct.

The protein localises to the nucleus. It localises to the gem. The protein resides in the cytoplasm. Functionally, the SMN complex catalyzes the assembly of small nuclear ribonucleoproteins (snRNPs), the building blocks of the spliceosome, and thereby plays an important role in the splicing of cellular pre-mRNAs. Most spliceosomal snRNPs contain a common set of Sm proteins SNRPB, SNRPD1, SNRPD2, SNRPD3, SNRPE, SNRPF and SNRPG that assemble in a heptameric protein ring on the Sm site of the small nuclear RNA to form the core snRNP (Sm core). In the cytosol, the Sm proteins SNRPD1, SNRPD2, SNRPE, SNRPF and SNRPG (5Sm) are trapped in an inactive 6S pICln-Sm complex by the chaperone CLNS1A that controls the assembly of the core snRNP. To assemble core snRNPs, the SMN complex accepts the trapped 5Sm proteins from CLNS1A. Binding of snRNA inside 5Sm ultimately triggers eviction of the SMN complex, thereby allowing binding of SNRPD3 and SNRPB to complete assembly of the core snRNP. Within the SMN complex, GEMIN2 constrains the conformation of 5Sm, thereby promoting 5Sm binding to snRNA containing the snRNP code (a nonameric Sm site and a 3'-adjacent stem-loop), thus preventing progression of assembly until a cognate substrate is bound. The sequence is that of Gem-associated protein 2 from Homo sapiens (Human).